Consider the following 548-residue polypeptide: Rhotekin (548 aa).

Residues 10–85 (DLNMLYIRQM…LQRRKEAQVL (76 aa)) enclose the REM-1 domain. Ser22 and Ser93 each carry phosphoserine. Residues 83 to 103 (QVLGKTGRRPSDSVQPPERSP) form a disordered region. At Arg217 the chain carries Asymmetric dimethylarginine. Position 219 is a phosphoserine (Ser219). In terms of domain architecture, PH spans 296–403 (QPTASGTLRV…WMEALWQLFL (108 aa)). 3 positions are modified to phosphoserine: Ser504, Ser513, and Ser528. Positions 506–548 (DAVPADHSLGPSRSVAPLPPQRSPQSRGFYSKSQLSTWLQSPV) are disordered. Residues 528-548 (SPQSRGFYSKSQLSTWLQSPV) show a composition bias toward polar residues.

As to quaternary structure, interacts via its C-terminal region with the TAX1BP3 PDZ domain. This interaction facilitates Rho-mediated activation of the c-Fos serum response element (SRE). Interacts with SEPT9. Specifically binds to GTP-bound RHOA, RHOB and RHOC and inhibits their GTPase activity.

Mediates Rho signaling to activate NF-kappa-B and may confer increased resistance to apoptosis to cells in gastric tumorigenesis. May play a novel role in the organization of septin structures. This Rattus norvegicus (Rat) protein is Rhotekin.